The sequence spans 646 residues: MSWSLRVDKPDTGESPFKHSLVTGAQEIPISSFADKTFTAPAQIRNFCIIAHIDHGKSTLADRMLQLTGVVDERSMRAQYLDRMDIERERGITIKAQNVRLSWSVTAGGTTENYVLHLIDTPGHVDFTYEVSRALEACEGAVLLVDAVQGIEAQTLANLYLALERDLTIIPVLNKIDLPAADPDRYAAEIAHIIGYESGDVLRVSGKTGEGVSDLLDEVVRRVPHPQGDPDAPTRAMIFDSVYDIYRGVVTYVRVVDGKISPRERIAMMSTGATYELLEVGIVSPEPKASAGLGVGEVGYLITGVKDVRQSKVGDTVTTVRYGATEPLTGYREPKPMVYSGLYPVDSSDYPSLRDALGKLQLNDAALTYEPETSVALGVGYRCGFLGLLHIDITRERLEREFDLDLISTSPNVVYRVVTEDNTEIVVTNPSDWPEGKIRTVYEPVVKITIIAPSEFIGTIMELCQSRRGELGGMDYLSPERVELRYIMPLGEIIFDFFDSLKSRTRGYASLDYEEAGEQEAQLVKVDILLQGEAVDAFSAIVHKDSASAYGNKMTNKLKELIPRQQFEVPVQAAIGSKVIARENIRAIRKDVLSKCYGGDITRKRKLLEKQKEGKKRMKTIGRVEVPQEAFVAALSADAAGDKDKK.

One can recognise a tr-type G domain in the interval 42–227; it reads AQIRNFCIIA…EVVRRVPHPQ (186 aa). GTP contacts are provided by residues 54–59 and 174–177; these read DHGKST and NKID.

It belongs to the TRAFAC class translation factor GTPase superfamily. Classic translation factor GTPase family. LepA subfamily.

The protein localises to the cell membrane. It catalyses the reaction GTP + H2O = GDP + phosphate + H(+). Its function is as follows. Required for accurate and efficient protein synthesis under certain stress conditions. May act as a fidelity factor of the translation reaction, by catalyzing a one-codon backward translocation of tRNAs on improperly translocated ribosomes. Back-translocation proceeds from a post-translocation (POST) complex to a pre-translocation (PRE) complex, thus giving elongation factor G a second chance to translocate the tRNAs correctly. Binds to ribosomes in a GTP-dependent manner. In Mycobacterium leprae (strain Br4923), this protein is Elongation factor 4.